The following is a 360-amino-acid chain: 3-dehydroquinate synthase (360 aa).

Residues 71–76 (DGEQYK), 105–109 (GVIGD), 129–130 (TT), Lys-142, Lys-151, and 169–172 (CLDT) each bind NAD(+). The Zn(2+) site is built by Glu-184, His-247, and His-264.

Belongs to the sugar phosphate cyclases superfamily. Dehydroquinate synthase family. The cofactor is Co(2+). It depends on Zn(2+) as a cofactor. Requires NAD(+) as cofactor.

It is found in the cytoplasm. The catalysed reaction is 7-phospho-2-dehydro-3-deoxy-D-arabino-heptonate = 3-dehydroquinate + phosphate. It functions in the pathway metabolic intermediate biosynthesis; chorismate biosynthesis; chorismate from D-erythrose 4-phosphate and phosphoenolpyruvate: step 2/7. Functionally, catalyzes the conversion of 3-deoxy-D-arabino-heptulosonate 7-phosphate (DAHP) to dehydroquinate (DHQ). The chain is 3-dehydroquinate synthase from Erwinia tasmaniensis (strain DSM 17950 / CFBP 7177 / CIP 109463 / NCPPB 4357 / Et1/99).